A 390-amino-acid chain; its full sequence is Cystathionine beta-lyase (390 aa).

N6-(pyridoxal phosphate)lysine is present on Lys-202.

It belongs to the trans-sulfuration enzymes family. It depends on pyridoxal 5'-phosphate as a cofactor.

The protein localises to the cytoplasm. It localises to the nucleus. The enzyme catalyses L,L-cystathionine + H2O = L-homocysteine + pyruvate + NH4(+). It catalyses the reaction an S-substituted L-cysteine + H2O = a thiol + pyruvate + NH4(+). It participates in amino-acid biosynthesis; L-methionine biosynthesis via de novo pathway; L-homocysteine from L-cystathionine: step 1/1. This is Cystathionine beta-lyase (str3) from Schizosaccharomyces pombe (strain 972 / ATCC 24843) (Fission yeast).